Here is a 150-residue protein sequence, read N- to C-terminus: Siroheme decarboxylase NirD subunit (150 aa).

This sequence belongs to the Ahb/Nir family. As to quaternary structure, probably forms a complex composed of NirD, NirL, NirG and NirH. All proteins are required for the total conversion of siroheme to didecarboxysiroheme.

The catalysed reaction is siroheme + 2 H(+) = 12,18-didecarboxysiroheme + 2 CO2. The protein operates within porphyrin-containing compound metabolism. In terms of biological role, involved in heme d1 biosynthesis. Catalyzes the decarboxylation of siroheme into didecarboxysiroheme. The polypeptide is Siroheme decarboxylase NirD subunit (Pseudomonas aeruginosa (strain ATCC 15692 / DSM 22644 / CIP 104116 / JCM 14847 / LMG 12228 / 1C / PRS 101 / PAO1)).